The following is a 776-amino-acid chain: Cilium assembly protein DZIP1L (776 aa).

The C2H2-type zinc finger occupies 166 to 189 (HTCHLCDKTFMNATFLRGHIQRRH). A coiled-coil region spans residues 196 to 450 (GKQKQEQQLG…RKVLAALRNN (255 aa)). Serine 425 and serine 426 each carry phosphoserine. A disordered region spans residues 520 to 776 (SRAKKRWEGT…SGSRPRIPGW (257 aa)). Residues 600–618 (GPSSTPVSPGPGLSTPPFS) show a composition bias toward low complexity. A compositionally biased stretch (polar residues) spans 652 to 683 (WSDSETSEESAQSPGKGSDGLASSATLVQSMV). Positions 685–694 (NLEKQLETPA) are enriched in basic and acidic residues. The span at 709-721 (TALQRSSTPARKT) shows a compositional bias: polar residues.

This sequence belongs to the DZIP C2H2-type zinc-finger protein family. In terms of assembly, interacts with SEPTIN2.

It localises to the cytoplasm. The protein resides in the cytoskeleton. The protein localises to the cilium basal body. Its subcellular location is the microtubule organizing center. It is found in the centrosome. It localises to the centriole. Functionally, involved in primary cilium formation. Probably acts as a transition zone protein required for localization of PKD1/PC1 and PKD2/PC2 to the ciliary membrane. In Rattus norvegicus (Rat), this protein is Cilium assembly protein DZIP1L.